The sequence spans 171 residues: MNSIPEGRPTPNLPRTANKRGVARLAAAQALYQMDVAGTGVMEVVAEYEAFRLGKEVDGTQYLDADPQWFRAIVAGVVEDQLKLDPMIHQALTEDWPLSRLDSTLRAILRAGAWELKARKDVPTAVIVSEYVDIAKAFYTEDEPKLVNAVLDRLALVIRGESRGAKPRHKS.

This sequence belongs to the NusB family.

In terms of biological role, involved in transcription antitermination. Required for transcription of ribosomal RNA (rRNA) genes. Binds specifically to the boxA antiterminator sequence of the ribosomal RNA (rrn) operons. In Brucella suis (strain ATCC 23445 / NCTC 10510), this protein is Transcription antitermination protein NusB.